The sequence spans 137 residues: Fructose-bisphosphate aldolase C (137 aa).

Catalysis depends on lysine 3, which acts as the Schiff-base intermediate with dihydroxyacetone-P.

This sequence belongs to the class I fructose-bisphosphate aldolase family. In terms of assembly, homotetramer.

It carries out the reaction beta-D-fructose 1,6-bisphosphate = D-glyceraldehyde 3-phosphate + dihydroxyacetone phosphate. The protein operates within carbohydrate degradation; glycolysis; D-glyceraldehyde 3-phosphate and glycerone phosphate from D-glucose: step 4/4. In Gallus gallus (Chicken), this protein is Fructose-bisphosphate aldolase C (ALDOC).